Reading from the N-terminus, the 218-residue chain is Protein N-lysine methyltransferase METTL21A (218 aa).

S-adenosyl-L-methionine-binding positions include Trp-47, 73–75, Asp-94, Trp-125, and Ala-143; that span reads GAG.

The protein belongs to the methyltransferase superfamily. METTL21 family. In terms of assembly, interacts with heat shock 70 family members; at least some of these proteins are methylation substrates.

It is found in the cytoplasm. It carries out the reaction L-lysyl-[protein] + 3 S-adenosyl-L-methionine = N(6),N(6),N(6)-trimethyl-L-lysyl-[protein] + 3 S-adenosyl-L-homocysteine + 3 H(+). Functionally, protein-lysine methyltransferase that selectively trimethylates residues in heat shock protein 70 (HSP70) family members. Contributes to the in vivo trimethylation of Lys residues in HSPA1 and HSPA8. In vitro methylates 'Lys-561' in HSPA1, 'Lys-564' in HSPA2, 'Lys-585' in HSPA5, 'Lys-563' in HSPA6 and 'Lys-561' in HSPA8. This chain is Protein N-lysine methyltransferase METTL21A (Mettl21A), found in Mus musculus (Mouse).